The following is a 434-amino-acid chain: Histidinol dehydrogenase (434 aa).

Positions 130, 188, and 211 each coordinate NAD(+). Substrate contacts are provided by Ser237, Gln259, and His262. The Zn(2+) site is built by Gln259 and His262. Active-site proton acceptor residues include Glu326 and His327. Residues His327, Asp360, Glu414, and His419 each coordinate substrate. Position 360 (Asp360) interacts with Zn(2+). A Zn(2+)-binding site is contributed by His419.

This sequence belongs to the histidinol dehydrogenase family. As to quaternary structure, homodimer. Zn(2+) serves as cofactor. It depends on Mn(2+) as a cofactor.

It carries out the reaction L-histidinol + 2 NAD(+) + H2O = L-histidine + 2 NADH + 3 H(+). It participates in amino-acid biosynthesis; L-histidine biosynthesis; L-histidine from 5-phospho-alpha-D-ribose 1-diphosphate: step 9/9. With respect to regulation, activity is lost when the metal is removed through urea denaturation or chelation, and can be regained by addition of metal. Catalyzes the sequential NAD-dependent oxidations of L-histidinol to L-histidinaldehyde and then to L-histidine. The sequence is that of Histidinol dehydrogenase (hisD) from Salmonella typhimurium (strain LT2 / SGSC1412 / ATCC 700720).